The primary structure comprises 511 residues: 2-isopropylmalate synthase (511 aa).

A Pyruvate carboxyltransferase domain is found at 5-267; that stretch reads LIIFDTTLRD…DTNIDTMHIL (263 aa). Mn(2+)-binding residues include Asp-14, His-202, His-204, and Asn-238. Positions 393–511 are regulatory domain; the sequence is KLVSLKVCTE…TVTNKAHPQI (119 aa).

Belongs to the alpha-IPM synthase/homocitrate synthase family. LeuA type 1 subfamily. In terms of assembly, homodimer. Mn(2+) serves as cofactor.

Its subcellular location is the cytoplasm. The enzyme catalyses 3-methyl-2-oxobutanoate + acetyl-CoA + H2O = (2S)-2-isopropylmalate + CoA + H(+). The protein operates within amino-acid biosynthesis; L-leucine biosynthesis; L-leucine from 3-methyl-2-oxobutanoate: step 1/4. Catalyzes the condensation of the acetyl group of acetyl-CoA with 3-methyl-2-oxobutanoate (2-ketoisovalerate) to form 3-carboxy-3-hydroxy-4-methylpentanoate (2-isopropylmalate). The polypeptide is 2-isopropylmalate synthase (Vesicomyosocius okutanii subsp. Calyptogena okutanii (strain HA)).